The sequence spans 116 residues: UPF0127 protein PF1050 (116 aa).

Belongs to the UPF0127 family.

The sequence is that of UPF0127 protein PF1050 from Pyrococcus furiosus (strain ATCC 43587 / DSM 3638 / JCM 8422 / Vc1).